We begin with the raw amino-acid sequence, 320 residues long: Putative GDP-polyphosphate phosphotransferase PKK2A (320 aa).

Disordered stretches follow at residues 1–21 (MRKKKDGQNLPDFRKNPPKLD), 246–267 (RPLPEIPHRPDSESDYVRPPRD), and 281–320 (EERIKKEEKAKKAKKPAKAAGKNSDKQKSSGGKGKKKSKK). Over residues 12–21 (DFRKNPPKLD) the composition is skewed to basic and acidic residues. The span at 281 to 290 (EERIKKEEKA) shows a compositional bias: basic and acidic residues.

The protein belongs to the polyphosphate kinase 2 (PPK2) family. Class I subfamily.

The enzyme catalyses [phosphate](n) + GTP = [phosphate](n+1) + GDP. The sequence is that of Putative GDP-polyphosphate phosphotransferase PKK2A from Corynebacterium glutamicum (strain ATCC 13032 / DSM 20300 / JCM 1318 / BCRC 11384 / CCUG 27702 / LMG 3730 / NBRC 12168 / NCIMB 10025 / NRRL B-2784 / 534).